Here is a 45-residue protein sequence, read N- to C-terminus: Large ribosomal subunit protein bL34 (45 aa).

2 stretches are compositionally biased toward basic residues: residues 1 to 15 (MKAK…RKRA) and 22 to 45 (MKTK…IAIK). Residues 1-45 (MKAKSHLSNKKRKRASGFLARMKTKAGRKILARRRAKGRKRIAIK) are disordered.

Belongs to the bacterial ribosomal protein bL34 family.

The sequence is that of Large ribosomal subunit protein bL34 from Sulfurihydrogenibium sp. (strain YO3AOP1).